Here is a 181-residue protein sequence, read N- to C-terminus: Ribulose bisphosphate carboxylase small subunit, chloroplastic 1 (181 aa).

The N-terminal 57 residues, 1–57 (MASSIVSSAAVATRSNVAQASMVAPFTGLKSAASFPVTKKNNNVDITSLASNGGRVR), are a transit peptide targeting the chloroplast.

The protein belongs to the RuBisCO small chain family. Heterohexadecamer of 8 large and 8 small subunits.

The protein localises to the plastid. The protein resides in the chloroplast. In terms of biological role, ruBisCO catalyzes two reactions: the carboxylation of D-ribulose 1,5-bisphosphate, the primary event in carbon dioxide fixation, as well as the oxidative fragmentation of the pentose substrate. Both reactions occur simultaneously and in competition at the same active site. Although the small subunit is not catalytic it is essential for maximal activity. The polypeptide is Ribulose bisphosphate carboxylase small subunit, chloroplastic 1 (Solanum tuberosum (Potato)).